A 381-amino-acid chain; its full sequence is L-lactate dehydrogenase (381 aa).

An FMN hydroxy acid dehydrogenase domain is found at 1 to 380 (MIISASTDYR…SADSLVRELG (380 aa)). Tyr24 lines the substrate pocket. FMN contacts are provided by Ser106 and Gln127. Tyr129 provides a ligand contact to substrate. Thr155 provides a ligand contact to FMN. Arg164 serves as a coordination point for substrate. Position 251 (Lys251) interacts with FMN. The active-site Proton acceptor is the His275. Residue Arg278 coordinates substrate. An FMN-binding site is contributed by 306–330 (DSGIRTGLDVVRMIALGADSVLLGR).

The protein belongs to the FMN-dependent alpha-hydroxy acid dehydrogenase family. In terms of assembly, homotetramer. It depends on FMN as a cofactor.

The protein localises to the cell inner membrane. The catalysed reaction is (S)-lactate + A = pyruvate + AH2. Catalyzes the conversion of L-lactate to pyruvate. Is coupled to the respiratory chain. The sequence is that of L-lactate dehydrogenase from Pseudomonas aeruginosa (strain UCBPP-PA14).